The chain runs to 293 residues: Serine/threonine-protein phosphatase 2A catalytic subunit beta isoform (293 aa).

Residues Asp-41, His-43, Asp-69, and Asn-101 each contribute to the Mn(2+) site. Catalysis depends on His-102, which acts as the Proton donor. His-151 and His-225 together coordinate Mn(2+). Tyr-291 is subject to Phosphotyrosine. Leu-293 carries the leucine methyl ester modification.

The protein belongs to the PPP phosphatase family. PP-1 subfamily. As to quaternary structure, found in a complex with at least ARL2, PPP2CB, PPP2R1A, PPP2R2A, PPP2R5E and TBCD. Interacts with TBCD. PP2A consists of a common heterodimeric core enzyme (composed of a 36 kDa catalytic subunit (subunit C) and a 65 kDa constant regulatory subunit (PR65) (subunit A)) that associates with a variety of regulatory subunits. Proteins that associate with the core dimer include three families of regulatory subunits B (the R2/B/PR55/B55, R3/B''/PR72/PR130/PR59 and R5/B'/B56 families), the 48 kDa variable regulatory subunit, viral proteins, and cell signaling molecules. Binds PPME1. May indirectly interact with SGO1, most probably through regulatory B56 subunits. Interacts with CTTNBP2NL. Interacts with PTPA. Part of the core of STRIPAK complexes composed of PP2A catalytic and scaffolding subunits, the striatins (PP2A regulatory subunits), the striatin-associated proteins MOB4, STRIP1 and STRIP2, PDCD10 and members of the STE20 kinases, such as STK24 and STK26. The cofactor is Mn(2+). Post-translationally, reversibly methyl esterified on Leu-293 by leucine carboxyl methyltransferase 1 (Lcmt1) and protein phosphatase methylesterase 1 (PPME1). Carboxyl methylation influences the affinity of the catalytic subunit for the different regulatory subunits, thereby modulating the PP2A holoenzyme's substrate specificity, enzyme activity and cellular localization. In terms of processing, phosphorylation of either threonine (by autophosphorylation-activated protein kinase) or tyrosine results in inactivation of the phosphatase. Auto-dephosphorylation has been suggested as a mechanism for reactivation. May be monoubiquitinated by NOSIP.

The protein resides in the cytoplasm. The protein localises to the nucleus. It localises to the chromosome. It is found in the centromere. Its subcellular location is the cytoskeleton. The protein resides in the spindle pole. The enzyme catalyses O-phospho-L-seryl-[protein] + H2O = L-seryl-[protein] + phosphate. It carries out the reaction O-phospho-L-threonyl-[protein] + H2O = L-threonyl-[protein] + phosphate. Its function is as follows. Catalytic subunit of protein phosphatase 2A (PP2A), a serine/threonine phosphatase involved in the regulation of a wide variety of enzymes, signal transduction pathways, and cellular events. PP2A can modulate the activity of phosphorylase B kinase, casein kinase 2, mitogen-stimulated S6 kinase, and MAP-2 kinase. Part of the striatin-interacting phosphatase and kinase (STRIPAK) complexes. STRIPAK complexes have critical roles in protein (de)phosphorylation and are regulators of multiple signaling pathways including Hippo, MAPK, nuclear receptor and cytoskeleton remodeling. Different types of STRIPAK complexes are involved in a variety of biological processes such as cell growth, differentiation, apoptosis, metabolism and immune regulation. The protein is Serine/threonine-protein phosphatase 2A catalytic subunit beta isoform (PPP2CB) of Sus scrofa (Pig).